A 270-amino-acid chain; its full sequence is S-methyl-5'-thioadenosine phosphorylase (270 aa).

Residues Ser16, 58 to 59 (RH), and 91 to 92 (SA) each bind phosphate. Disulfide bonds link Cys138–Cys205, Cys200–Cys262, and Cys259–Cys261. Met190 is a substrate binding site. Position 191 (Thr191) interacts with phosphate. 214 to 216 (DYD) lines the substrate pocket.

This sequence belongs to the PNP/MTAP phosphorylase family. MTAP subfamily. Homohexamer. Dimer of a homotrimer.

It carries out the reaction S-methyl-5'-thioadenosine + phosphate = 5-(methylsulfanyl)-alpha-D-ribose 1-phosphate + adenine. It functions in the pathway amino-acid biosynthesis; L-methionine biosynthesis via salvage pathway; S-methyl-5-thio-alpha-D-ribose 1-phosphate from S-methyl-5'-thioadenosine (phosphorylase route): step 1/1. Catalyzes the reversible phosphorylation of S-methyl-5'-thioadenosine (MTA) to adenine and 5-methylthioribose-1-phosphate. Involved in the breakdown of MTA, a major by-product of polyamine biosynthesis. Responsible for the first step in the methionine salvage pathway after MTA has been generated from S-adenosylmethionine. Has broad substrate specificity with 6-aminopurine nucleosides as preferred substrates. The chain is S-methyl-5'-thioadenosine phosphorylase from Saccharolobus solfataricus (strain ATCC 35092 / DSM 1617 / JCM 11322 / P2) (Sulfolobus solfataricus).